Reading from the N-terminus, the 333-residue chain is Adenosine deaminase (333 aa).

Residues H12 and H14 each contribute to the Zn(2+) site. Residues H14, D16, and G170 each coordinate substrate. Position 197 (H197) interacts with Zn(2+). E200 serves as the catalytic Proton donor. Zn(2+) is bound at residue D278. D279 is a substrate binding site.

It belongs to the metallo-dependent hydrolases superfamily. Adenosine and AMP deaminases family. Adenosine deaminase subfamily. It depends on Zn(2+) as a cofactor.

It catalyses the reaction adenosine + H2O + H(+) = inosine + NH4(+). It carries out the reaction 2'-deoxyadenosine + H2O + H(+) = 2'-deoxyinosine + NH4(+). In terms of biological role, catalyzes the hydrolytic deamination of adenosine and 2-deoxyadenosine. The polypeptide is Adenosine deaminase (Shigella sonnei (strain Ss046)).